Here is a 200-residue protein sequence, read N- to C-terminus: Gamma-glutamyl-CDP-amidate hydrolase (200 aa).

The 181-residue stretch at 20-200 (ECLALDWGKL…LKEWFSLIKE (181 aa)) folds into the Glutamine amidotransferase type-1 domain. The Nucleophile role is filled by C101. Catalysis depends on residues H178 and E180.

It catalyses the reaction N(5)-(cytidine 5'-diphosphoramidyl)-L-glutamine + H2O = cytidine 5'-diphosphoramidate + L-glutamate + H(+). It participates in capsule biogenesis; capsule polysaccharide biosynthesis. Its function is as follows. Involved in the biosynthesis of the O-methyl phosphoramidate (MeOPN) group found on the capsular polysaccharide (CPS) of C.jejuni. Catalyzes the hydrolysis of CDP-L-glutamine to L-glutamate and cytidine diphosphoramidate. This is Gamma-glutamyl-CDP-amidate hydrolase from Campylobacter jejuni subsp. jejuni serotype O:2 (strain ATCC 700819 / NCTC 11168).